The sequence spans 674 residues: Sterile alpha motif domain-containing protein 15 (674 aa).

The segment covering 1 to 18 (MAEVPEDYDSGPDEDGEL) has biased composition (acidic residues). The interval 1-448 (MAEVPEDYDS…LEHREPKRGK (448 aa)) is disordered. Composition is skewed to basic and acidic residues over residues 87–142 (IAKE…EEAK), 195–223 (ESLR…KLGE), and 236–274 (TKPE…KSSE). The span at 276 to 290 (AGLEPPEETQPEVPE) shows a compositional bias: acidic residues. Composition is skewed to basic and acidic residues over residues 291–322 (EMQR…KSTD), 330–346 (EEIK…KTNE), 354–372 (EMMK…EKKN), and 391–429 (VEEK…EPIK). The SAM domain maps to 545 to 608 (WDPEEVAEWI…SRHTQELLEI (64 aa)).

The chain is Sterile alpha motif domain-containing protein 15 (SAMD15) from Homo sapiens (Human).